Consider the following 299-residue polypeptide: Oxygen-dependent coproporphyrinogen-III oxidase (299 aa).

Serine 92 serves as a coordination point for substrate. Residues histidine 96 and histidine 106 each coordinate a divalent metal cation. Histidine 106 acts as the Proton donor in catalysis. Residue 108-110 (NVR) coordinates substrate. Histidine 145 and histidine 175 together coordinate a divalent metal cation. The interval 240-275 (YVEFNLVWDRGTLFGLQTGGRTESILMSMPPLVRWE) is important for dimerization. Substrate is bound at residue 258-260 (GGR).

Belongs to the aerobic coproporphyrinogen-III oxidase family. As to quaternary structure, homodimer. The cofactor is a divalent metal cation.

It is found in the cytoplasm. It catalyses the reaction coproporphyrinogen III + O2 + 2 H(+) = protoporphyrinogen IX + 2 CO2 + 2 H2O. It participates in porphyrin-containing compound metabolism; protoporphyrin-IX biosynthesis; protoporphyrinogen-IX from coproporphyrinogen-III (O2 route): step 1/1. Its function is as follows. Involved in the heme biosynthesis. Catalyzes the aerobic oxidative decarboxylation of propionate groups of rings A and B of coproporphyrinogen-III to yield the vinyl groups in protoporphyrinogen-IX. In Klebsiella pneumoniae subsp. pneumoniae (strain ATCC 700721 / MGH 78578), this protein is Oxygen-dependent coproporphyrinogen-III oxidase.